The chain runs to 331 residues: 2-keto-3-deoxygluconate permease (331 aa).

10 helical membrane-spanning segments follow: residues 10 to 30 (IPGG…TLAP), 42 to 62 (GMIS…GASI), 77 to 97 (LVLT…MFIP), 100 to 120 (GIQT…AMDM), 141 to 161 (AFVL…LGSA), 163 to 183 (LASF…IGFA), 200 to 220 (PVLI…NVIM), 224 to 244 (LLGI…LIIA), 254 to 274 (TAGV…MIIA), and 289 to 309 (ALVA…TALY).

It belongs to the KdgT transporter family.

Its subcellular location is the cell inner membrane. The enzyme catalyses 2-dehydro-3-deoxy-D-gluconate(in) + H(+)(in) = 2-dehydro-3-deoxy-D-gluconate(out) + H(+)(out). Its function is as follows. Catalyzes the proton-dependent uptake of 2-keto-3-deoxygluconate (KDG) into the cell. The polypeptide is 2-keto-3-deoxygluconate permease (Enterobacter sp. (strain 638)).